Reading from the N-terminus, the 146-residue chain is UPF0306 protein CKO_04548 (146 aa).

The protein belongs to the UPF0306 family.

This chain is UPF0306 protein CKO_04548, found in Citrobacter koseri (strain ATCC BAA-895 / CDC 4225-83 / SGSC4696).